The chain runs to 419 residues: 3-isopropylmalate dehydratase large subunit (419 aa).

The [4Fe-4S] cluster site is built by Cys300, Cys360, and Cys363.

This sequence belongs to the aconitase/IPM isomerase family. LeuC type 2 subfamily. Heterodimer of LeuC and LeuD. The cofactor is [4Fe-4S] cluster.

It carries out the reaction (2R,3S)-3-isopropylmalate = (2S)-2-isopropylmalate. Its pathway is amino-acid biosynthesis; L-leucine biosynthesis; L-leucine from 3-methyl-2-oxobutanoate: step 2/4. Catalyzes the isomerization between 2-isopropylmalate and 3-isopropylmalate, via the formation of 2-isopropylmaleate. The sequence is that of 3-isopropylmalate dehydratase large subunit from Nitratidesulfovibrio vulgaris (strain ATCC 29579 / DSM 644 / CCUG 34227 / NCIMB 8303 / VKM B-1760 / Hildenborough) (Desulfovibrio vulgaris).